The chain runs to 179 residues: Crossover junction endodeoxyribonuclease RuvC (179 aa).

Catalysis depends on residues aspartate 7, glutamate 67, and aspartate 140. Mg(2+)-binding residues include aspartate 7, glutamate 67, and aspartate 140.

It belongs to the RuvC family. In terms of assembly, homodimer which binds Holliday junction (HJ) DNA. The HJ becomes 2-fold symmetrical on binding to RuvC with unstacked arms; it has a different conformation from HJ DNA in complex with RuvA. In the full resolvosome a probable DNA-RuvA(4)-RuvB(12)-RuvC(2) complex forms which resolves the HJ. Mg(2+) is required as a cofactor.

It localises to the cytoplasm. It carries out the reaction Endonucleolytic cleavage at a junction such as a reciprocal single-stranded crossover between two homologous DNA duplexes (Holliday junction).. In terms of biological role, the RuvA-RuvB-RuvC complex processes Holliday junction (HJ) DNA during genetic recombination and DNA repair. Endonuclease that resolves HJ intermediates. Cleaves cruciform DNA by making single-stranded nicks across the HJ at symmetrical positions within the homologous arms, yielding a 5'-phosphate and a 3'-hydroxyl group; requires a central core of homology in the junction. The consensus cleavage sequence is 5'-(A/T)TT(C/G)-3'. Cleavage occurs on the 3'-side of the TT dinucleotide at the point of strand exchange. HJ branch migration catalyzed by RuvA-RuvB allows RuvC to scan DNA until it finds its consensus sequence, where it cleaves and resolves the cruciform DNA. The polypeptide is Crossover junction endodeoxyribonuclease RuvC (Salinibacter ruber (strain DSM 13855 / M31)).